Consider the following 228-residue polypeptide: Cytidylate kinase (228 aa).

17–25 (GPTASGKGT) is an ATP binding site.

The protein belongs to the cytidylate kinase family. Type 1 subfamily.

It is found in the cytoplasm. It carries out the reaction CMP + ATP = CDP + ADP. The enzyme catalyses dCMP + ATP = dCDP + ADP. The protein is Cytidylate kinase of Burkholderia cenocepacia (strain HI2424).